The chain runs to 343 residues: Putative outer membrane protein y4fJ (343 aa).

Residues 1-17 (MRMNFSTVLLGSSVALA) form the signal peptide.

It belongs to the alphaproteobacteria porin family.

Its subcellular location is the cell outer membrane. Its function is as follows. May act as an outer membrane pore. This chain is Putative outer membrane protein y4fJ, found in Sinorhizobium fredii (strain NBRC 101917 / NGR234).